A 244-amino-acid chain; its full sequence is DNA polymerase sliding clamp (244 aa).

This sequence belongs to the PCNA family. Homotrimer. The subunits circularize to form a toroid; DNA passes through its center. Replication factor C (RFC) is required to load the toroid on the DNA.

Its function is as follows. Sliding clamp subunit that acts as a moving platform for DNA processing. Responsible for tethering the catalytic subunit of DNA polymerase to DNA during high-speed replication. In conjunction with replication factor C (RFC) stimulates DNA synthesis by PolB, relieving inhibition by replication protein A (RPA). This chain is DNA polymerase sliding clamp, found in Methanothermobacter thermautotrophicus (strain ATCC 29096 / DSM 1053 / JCM 10044 / NBRC 100330 / Delta H) (Methanobacterium thermoautotrophicum).